The chain runs to 177 residues: ATP synthase subunit delta (177 aa).

This sequence belongs to the ATPase delta chain family. F-type ATPases have 2 components, F(1) - the catalytic core - and F(0) - the membrane proton channel. F(1) has five subunits: alpha(3), beta(3), gamma(1), delta(1), epsilon(1). F(0) has three main subunits: a(1), b(2) and c(10-14). The alpha and beta chains form an alternating ring which encloses part of the gamma chain. F(1) is attached to F(0) by a central stalk formed by the gamma and epsilon chains, while a peripheral stalk is formed by the delta and b chains.

Its subcellular location is the cell inner membrane. Functionally, f(1)F(0) ATP synthase produces ATP from ADP in the presence of a proton or sodium gradient. F-type ATPases consist of two structural domains, F(1) containing the extramembraneous catalytic core and F(0) containing the membrane proton channel, linked together by a central stalk and a peripheral stalk. During catalysis, ATP synthesis in the catalytic domain of F(1) is coupled via a rotary mechanism of the central stalk subunits to proton translocation. Its function is as follows. This protein is part of the stalk that links CF(0) to CF(1). It either transmits conformational changes from CF(0) to CF(1) or is implicated in proton conduction. This chain is ATP synthase subunit delta, found in Shewanella sp. (strain ANA-3).